The primary structure comprises 340 residues: uncharacterized protein (340 aa).

This is an uncharacterized protein from Acanthamoeba polyphaga mimivirus (APMV).